Consider the following 840-residue polypeptide: MSAPPRLSARLSVLDQKKSNAPSPTSPTGLKTSLGMPPNSGSSGGGGGLKSSVGISSLPTIPSTKSTSPTLPKRNSANLSLLQQQQQQHTNKSTSPSSNTPTATSTTSPFSYLGKQASAQNLNTMMSMMMLNKNPLSPVVPQPGASLFYATPTEADDEEFEHIRNLLNSEYSVTTVQSTGALKSSNLVVMSWKNNATSELTEQDDQLENDKRDLQFIKEQLEKNNSMSKQMIYILDRFNEGLSQLEMDVAPINASMNEWSSIFNNINSTMEQVKSVLDKFDVDKIDSKINDGAKGDYVSYMLALEHVGNAIDYIAEKSHFKSSDKVMDALKQLKATGLNELETSFKSLLLKISNLVDPTTIAKLPNSKRYLAIILPNHVEEISKYIELFEKLHYNAFLKEYKDKRSKFILLSLRKMAPEKFIKQTSETKNLAYVKGSHPLISYVQETLRLYQIEYDLASELFGNQYQLILDEIIDPAHELLLETTEPIIKVRKTPGDKIFSIFPLLDLFDTFTKLLPDFITAISSRDGKHISELKTQIKHLQDTCASLLDFSLDEEKEISSSNRKEIISDATVDEISSNMINYFKRLIEYKHSVELLLKGQDNNNSNSNSNAPSSTSSNSKSSSSSSSSSSSNSASSTILPTSFIGFLEKILKNLIKYLQGRAKKDFPTQPATDFFKPPIKSVIFQINNYHYISTSLKQSKILSNQQFENNELASANHILHEFETCLDNEIKVLNSFWKTIADILITNKSNKEKDEVKSIIKKHTNFLKTFNDLNKLKFDIPDQELKLKLKTEAKNIIGRSYDQFKELCRLEKIHLEKNFVPFETTDDINRKLDRVFDSQ.

A disordered region spans residues Met1–Tyr112. A compositionally biased stretch (polar residues) spans Ser19 to Lys31. 2 stretches are compositionally biased toward low complexity: residues Lys50–Lys73 and Gln83–Ser111. A coiled-coil region spans residues Lys193–Met227. Residues Gln601 to Thr638 are disordered. Over residues Asn603 to Ser637 the composition is skewed to low complexity.

The protein belongs to the EXO70 family. The exocyst complex is composed of sec3/exoc1, sec5/exoc2, sec6/exoc3, sec8/exoc4, sec10/exoc5, sec15/exoc6, exo70/exoc7 and exo84/exoc8.

The protein localises to the cytoplasm. The protein resides in the cytosol. It is found in the cell membrane. It localises to the midbody. Its subcellular location is the midbody ring. In terms of biological role, component of the exocyst complex involved in the docking of exocytic vesicles with fusion sites on the plasma membrane. The sequence is that of Exocyst complex component 7 (exoc7) from Dictyostelium discoideum (Social amoeba).